Consider the following 142-residue polypeptide: Hemoglobin larval subunit alpha (142 aa).

In terms of domain architecture, Globin spans 2–142; sequence VLSAEEKALV…VSAVLTSKYR (141 aa). O2 is bound at residue histidine 59. Histidine 88 provides a ligand contact to heme b.

This sequence belongs to the globin family. In terms of assembly, heterotetramer of two alpha chains and two beta chains. As to expression, red blood cells.

Involved in oxygen transport from the lung to the various peripheral tissues. This is Hemoglobin larval subunit alpha from Pleurodeles waltl (Iberian ribbed newt).